Here is a 935-residue protein sequence, read N- to C-terminus: Protein translocase subunit SecA (935 aa).

Residues Q90, 108-112, and D504 contribute to the ATP site; that span reads GEGKT.

The protein belongs to the SecA family. Monomer and homodimer. Part of the essential Sec protein translocation apparatus which comprises SecA, SecYEG and auxiliary proteins SecDF. Other proteins may also be involved.

The protein localises to the cell inner membrane. It localises to the cellular thylakoid membrane. The protein resides in the cytoplasm. The enzyme catalyses ATP + H2O + cellular proteinSide 1 = ADP + phosphate + cellular proteinSide 2.. Its function is as follows. Part of the Sec protein translocase complex. Interacts with the SecYEG preprotein conducting channel. Has a central role in coupling the hydrolysis of ATP to the transfer of proteins into and across the cell membrane, serving as an ATP-driven molecular motor driving the stepwise translocation of polypeptide chains across the membrane. Functionally, probably participates in protein translocation into and across both the cytoplasmic and thylakoid membranes in cyanobacterial cells. The protein is Protein translocase subunit SecA of Gloeothece citriformis (strain PCC 7424) (Cyanothece sp. (strain PCC 7424)).